Reading from the N-terminus, the 243-residue chain is MTEIKFHRVLLKLSGEALAGPGGSGIDLTTVKRVANELAEIKRAYPQVQIAIVNGGGNLWRGEPAAKAGMDRARADYIGMLGTVMNALSLADALEQAGVVTRVLTAIEMRQIAEPYIRGRAIRHLEKGRIVIFGAGTGSPYFSTDTTAALRAAEINADAILMGKNGVDGVYDSDPRKNNEAIKFAELTYDEVLRKDLKVMDSTAGAMAKDTDMPLVVFNLNEAGNIQKAIEGQDIGTVIKGSK.

Residue 12 to 15 (KLSG) coordinates ATP. The tract at residues 20–25 (GPGGSG) is involved in allosteric activation by GTP. Residue glycine 56 participates in UMP binding. ATP contacts are provided by glycine 57 and arginine 61. UMP contacts are provided by residues aspartate 76 and 137-144 (TGSPYFST). Residues asparagine 165, tyrosine 171, and aspartate 174 each contribute to the ATP site.

This sequence belongs to the UMP kinase family. In terms of assembly, homohexamer.

It localises to the cytoplasm. The catalysed reaction is UMP + ATP = UDP + ADP. Its pathway is pyrimidine metabolism; CTP biosynthesis via de novo pathway; UDP from UMP (UMPK route): step 1/1. Allosterically activated by GTP. Inhibited by UTP. Its function is as follows. Catalyzes the reversible phosphorylation of UMP to UDP. The protein is Uridylate kinase of Oenococcus oeni (strain ATCC BAA-331 / PSU-1).